Reading from the N-terminus, the 454-residue chain is CCA-adding enzyme (454 aa).

ATP is bound by residues Ser-59 and Arg-62. 2 residues coordinate CTP: Ser-59 and Arg-62. The Mg(2+) site is built by Asp-71, Asp-73, and Asp-125. ATP-binding residues include His-148, Lys-167, and Tyr-176. His-148, Lys-167, and Tyr-176 together coordinate CTP.

Belongs to the tRNA nucleotidyltransferase/poly(A) polymerase family. Archaeal CCA-adding enzyme subfamily. In terms of assembly, homodimer. Mg(2+) serves as cofactor.

The enzyme catalyses a tRNA precursor + 2 CTP + ATP = a tRNA with a 3' CCA end + 3 diphosphate. It catalyses the reaction a tRNA with a 3' CCA end + 2 CTP + ATP = a tRNA with a 3' CCACCA end + 3 diphosphate. Its function is as follows. Catalyzes the addition and repair of the essential 3'-terminal CCA sequence in tRNAs without using a nucleic acid template. Adds these three nucleotides in the order of C, C, and A to the tRNA nucleotide-73, using CTP and ATP as substrates and producing inorganic pyrophosphate. tRNA 3'-terminal CCA addition is required both for tRNA processing and repair. Also involved in tRNA surveillance by mediating tandem CCA addition to generate a CCACCA at the 3' terminus of unstable tRNAs. While stable tRNAs receive only 3'-terminal CCA, unstable tRNAs are marked with CCACCA and rapidly degraded. The sequence is that of CCA-adding enzyme from Methanosarcina acetivorans (strain ATCC 35395 / DSM 2834 / JCM 12185 / C2A).